Here is a 69-residue protein sequence, read N- to C-terminus: MEVILEIPNVLHEEKHCEDFLDCVEIYMKYLTKYGKQLGICYGQNSLKKFPISGEFRNECENGYVEIVK.

This is an uncharacterized protein from Saccharolobus islandicus (Sulfolobus islandicus).